The sequence spans 345 residues: Dihydroorotase (345 aa).

H13 and H15 together coordinate Zn(2+). Residues 15 to 17 and N41 contribute to the substrate site; that span reads HLR. Residues K99, H136, and H174 each contribute to the Zn(2+) site. Position 99 is an N6-carboxylysine (K99). Position 136 (H136) interacts with substrate. L219 serves as a coordination point for substrate. Position 247 (D247) interacts with Zn(2+). Residue D247 is part of the active site. 2 residues coordinate substrate: H251 and A263.

This sequence belongs to the metallo-dependent hydrolases superfamily. DHOase family. Class II DHOase subfamily. As to quaternary structure, homodimer. Requires Zn(2+) as cofactor.

The enzyme catalyses (S)-dihydroorotate + H2O = N-carbamoyl-L-aspartate + H(+). It functions in the pathway pyrimidine metabolism; UMP biosynthesis via de novo pathway; (S)-dihydroorotate from bicarbonate: step 3/3. In terms of biological role, catalyzes the reversible cyclization of carbamoyl aspartate to dihydroorotate. The protein is Dihydroorotase of Acaryochloris marina (strain MBIC 11017).